We begin with the raw amino-acid sequence, 539 residues long: MGASTRFRRQSGKVPYNSTAASVIIARFPHRITFGCPRPRGNENGMFDDKIGDLGVTFDDVLLQPRYSEVVPSEVDVSSQMTQRIRLQIPLISSPMDTVTESEMAIALAKEGGLGIVHKNLSVRRQTEEVLKVKRSANGIIVNPVTLNPAQKVSAAAELMDRANVSGIPIVEDDRTLAGILTRRDLRFLEDPDMPISQVMTRENLVTAVGNVTLAQAEKILTEKRVEKLLLIDEERKLTGLITIRDIDMMKRYPRACKDPQGRLRVGAAIGVGDYERAESLIGKGVDVLVVDSAHGHSRNVIETVREIKQNKSWDIDVVAGNVATAEGAADLIAAGADAVKVGIGPGSICTTRVISGIGVPQVTAILSAVKVAQEKNIPVIADGGIRFSGDITKAIAAGASTVMIGSLFAGLAESPGKMILYQGRTFKAYRGMGSMGAMVKGSSDRYRQKGTEAGKLVPEGVEGRVPFKGPLSDYAYQLVGGLRAGMGYVGTRTIEELRRDAKFIRVSAATVRENHPHDIAITQEAPNYSPDVHSGDAG.

2 consecutive CBS domains span residues 140 to 196 (IIVN…DMPI) and 200 to 257 (MTRE…PRAC). NAD(+) is bound by residues aspartate 292 and 343–345 (GIG). Glycine 345 and glycine 347 together coordinate K(+). Residue serine 348 participates in IMP binding. Position 350 (cysteine 350) interacts with K(+). The active-site Thioimidate intermediate is the cysteine 350. Residues 383-385 (DGG), 406-407 (GS), and 430-434 (YRGMG) each bind IMP. Arginine 446 serves as the catalytic Proton acceptor. Glutamate 460 is a binding site for IMP. K(+) is bound by residues glutamate 514 and histidine 516. A disordered region spans residues 517 to 539 (PHDIAITQEAPNYSPDVHSGDAG).

This sequence belongs to the IMPDH/GMPR family. As to quaternary structure, homotetramer. It depends on K(+) as a cofactor.

The catalysed reaction is IMP + NAD(+) + H2O = XMP + NADH + H(+). The protein operates within purine metabolism; XMP biosynthesis via de novo pathway; XMP from IMP: step 1/1. Mycophenolic acid (MPA) is a non-competitive inhibitor that prevents formation of the closed enzyme conformation by binding to the same site as the amobile flap. In contrast, mizoribine monophosphate (MZP) is a competitive inhibitor that induces the closed conformation. MPA is a potent inhibitor of mammalian IMPDHs but a poor inhibitor of the bacterial enzymes. MZP is a more potent inhibitor of bacterial IMPDH. Functionally, catalyzes the conversion of inosine 5'-phosphate (IMP) to xanthosine 5'-phosphate (XMP), the first committed and rate-limiting step in the de novo synthesis of guanine nucleotides, and therefore plays an important role in the regulation of cell growth. This Rhodopirellula baltica (strain DSM 10527 / NCIMB 13988 / SH1) protein is Inosine-5'-monophosphate dehydrogenase.